Consider the following 538-residue polypeptide: Cytochrome P450 18a1 (538 aa).

The chain crosses the membrane as a helical span at residues 24 to 44; sequence QHLLMVFLGLLALVTLLQWLV. Cysteine 466 lines the heme pocket.

The protein belongs to the cytochrome P450 family. The cofactor is heme. As to expression, expressed in body wall (epidermal and muscle cells) and mid- and hind-gut.

It localises to the endoplasmic reticulum membrane. It is found in the microsome membrane. In terms of biological role, probably involved in steroid hormones biosynthesis. In Drosophila melanogaster (Fruit fly), this protein is Cytochrome P450 18a1 (Cyp18a1).